The sequence spans 560 residues: Potassium-transporting ATPase potassium-binding subunit (560 aa).

12 helical membrane-spanning segments follow: residues 6–26, 63–83, 132–152, 175–195, 250–270, 282–302, 327–347, 356–376, 379–399, 416–436, 483–503, and 524–544; these read FLLI…LGSL, LLAI…ILMC, GLAV…FALI, LWVL…QGAI, LTNV…CFAF, AILW…MWAE, FGIL…CGAV, ALGG…FGGV, GLYG…LMIG, MTAL…ALAM, LLLA…VMAI, and GALF…LTFI.

Belongs to the KdpA family. As to quaternary structure, the system is composed of three essential subunits: KdpA, KdpB and KdpC.

The protein resides in the cell inner membrane. Functionally, part of the high-affinity ATP-driven potassium transport (or Kdp) system, which catalyzes the hydrolysis of ATP coupled with the electrogenic transport of potassium into the cytoplasm. This subunit binds the periplasmic potassium ions and delivers the ions to the membrane domain of KdpB through an intramembrane tunnel. The sequence is that of Potassium-transporting ATPase potassium-binding subunit from Cronobacter sakazakii (strain ATCC BAA-894) (Enterobacter sakazakii).